A 572-amino-acid polypeptide reads, in one-letter code: Proline--tRNA ligase (572 aa).

It belongs to the class-II aminoacyl-tRNA synthetase family. ProS type 1 subfamily. Homodimer.

It is found in the cytoplasm. The catalysed reaction is tRNA(Pro) + L-proline + ATP = L-prolyl-tRNA(Pro) + AMP + diphosphate. Catalyzes the attachment of proline to tRNA(Pro) in a two-step reaction: proline is first activated by ATP to form Pro-AMP and then transferred to the acceptor end of tRNA(Pro). As ProRS can inadvertently accommodate and process non-cognate amino acids such as alanine and cysteine, to avoid such errors it has two additional distinct editing activities against alanine. One activity is designated as 'pretransfer' editing and involves the tRNA(Pro)-independent hydrolysis of activated Ala-AMP. The other activity is designated 'posttransfer' editing and involves deacylation of mischarged Ala-tRNA(Pro). The misacylated Cys-tRNA(Pro) is not edited by ProRS. The polypeptide is Proline--tRNA ligase (Escherichia coli O139:H28 (strain E24377A / ETEC)).